The sequence spans 488 residues: 3-octaprenyl-4-hydroxybenzoate carboxy-lyase (488 aa).

N172 serves as a coordination point for Mn(2+). Prenylated FMN is bound by residues 175–177, 189–191, and 194–195; these read IYR, RWL, and RG. Mn(2+) is bound at residue E238. Residue D287 is the Proton donor of the active site.

Belongs to the UbiD family. As to quaternary structure, homohexamer. It depends on prenylated FMN as a cofactor. Requires Mn(2+) as cofactor.

The protein resides in the cell membrane. The enzyme catalyses a 4-hydroxy-3-(all-trans-polyprenyl)benzoate + H(+) = a 2-(all-trans-polyprenyl)phenol + CO2. The protein operates within cofactor biosynthesis; ubiquinone biosynthesis. Catalyzes the decarboxylation of 3-octaprenyl-4-hydroxy benzoate to 2-octaprenylphenol, an intermediate step in ubiquinone biosynthesis. The sequence is that of 3-octaprenyl-4-hydroxybenzoate carboxy-lyase from Pseudomonas syringae pv. syringae (strain B728a).